The primary structure comprises 110 residues: Histone H2A.1 (110 aa).

Belongs to the histone H2A family. In terms of assembly, the nucleosome is a histone octamer containing two molecules each of H2A, H2B, H3 and H4 assembled in one H3-H4 heterotetramer and two H2A-H2B heterodimers. The octamer wraps approximately 147 bp of DNA. Expressed in the generative cell within the bicellular pollen. Not detected in other reproductive or vegetative tissues.

Its subcellular location is the nucleus. The protein resides in the chromosome. Its function is as follows. Core component of nucleosome. Nucleosomes wrap and compact DNA into chromatin, limiting DNA accessibility to the cellular machineries which require DNA as a template. Histones thereby play a central role in transcription regulation, DNA repair, DNA replication and chromosomal stability. DNA accessibility is regulated via a complex set of post-translational modifications of histones, also called histone code, and nucleosome remodeling. The polypeptide is Histone H2A.1 (gcH2A) (Lilium longiflorum (Trumpet lily)).